We begin with the raw amino-acid sequence, 342 residues long: Non-homologous end-joining protein 1 (342 aa).

The next 2 membrane-spanning stretches (helical) occupy residues 27–47 (LLLF…LVSL) and 129–149 (MFYM…NLST). Residues 173–342 (LRDLDGGSKV…RKFGKVRIKN (170 aa)) are interaction with LIF1. Residues 270–342 (ADPTNEARPN…RKFGKVRIKN (73 aa)) are disordered. Residues 286–296 (PKTDFKPKSRE) are compositionally biased toward basic and acidic residues. The segment covering 297–312 (SSTSSQLRLENFSESE) has biased composition (polar residues). A compositionally biased stretch (basic residues) spans 331–342 (KKRKFGKVRIKN).

It belongs to the XRCC4-XLF family. XLF subfamily. In terms of assembly, interacts (via C-terminus) with LIF1 (via N-terminus); the interaction is direct. Interacts with DNL4.

The protein resides in the cytoplasm. It is found in the nucleus membrane. Functionally, involved in non-homologous end joining (NHEJ). Facilitates the transport of LIF1 into the nucleus, where it can interact with DNA ligase DNL4 to repair double-strand breaks (DSB). Mediates mating-type regulation of NHEJ. Prevents chromosome circularisation by NHEJ in absence of telomerase. The sequence is that of Non-homologous end-joining protein 1 (NEJ1) from Saccharomyces cerevisiae (strain ATCC 204508 / S288c) (Baker's yeast).